The following is a 449-amino-acid chain: Xylose isomerase (449 aa).

Catalysis depends on residues histidine 103 and aspartate 106. Positions 234, 270, 273, 298, 309, 311, and 342 each coordinate Mg(2+).

Belongs to the xylose isomerase family. In terms of assembly, homotetramer. It depends on Mg(2+) as a cofactor.

The protein resides in the cytoplasm. It catalyses the reaction alpha-D-xylose = alpha-D-xylulofuranose. The sequence is that of Xylose isomerase from Levilactobacillus brevis (Lactobacillus brevis).